The sequence spans 209 residues: Large ribosomal subunit protein uL4 (209 aa).

The segment at 47 to 72 (TSSTKTRSEVRGSSKKPWKQKGTGRA) is disordered. The segment covering 59–72 (SSKKPWKQKGTGRA) has biased composition (basic residues).

It belongs to the universal ribosomal protein uL4 family. Part of the 50S ribosomal subunit.

In terms of biological role, one of the primary rRNA binding proteins, this protein initially binds near the 5'-end of the 23S rRNA. It is important during the early stages of 50S assembly. It makes multiple contacts with different domains of the 23S rRNA in the assembled 50S subunit and ribosome. Forms part of the polypeptide exit tunnel. The polypeptide is Large ribosomal subunit protein uL4 (Borreliella burgdorferi (strain ZS7) (Borrelia burgdorferi)).